A 324-amino-acid chain; its full sequence is Appendage-associated protein (324 aa).

The first 32 residues, methionine 1–alanine 32, serve as a signal peptide directing secretion. The stretch at isoleucine 195–lysine 255 forms a coiled coil.

It is found in the secreted. In terms of biological role, associates with actin filament appendages that are formed in the inclusion appendages of the parasitophorous vacuole during infection of the host erythrocyte. This Anaplasma marginale (strain Florida) protein is Appendage-associated protein (aaaP1).